Here is a 222-residue protein sequence, read N- to C-terminus: Deoxyribose-phosphate aldolase (222 aa).

Residue aspartate 92 is the Proton donor/acceptor of the active site. The Schiff-base intermediate with acetaldehyde role is filled by lysine 156. The active-site Proton donor/acceptor is lysine 185.

This sequence belongs to the DeoC/FbaB aldolase family. DeoC type 1 subfamily. Homodimer.

The protein resides in the cytoplasm. The enzyme catalyses 2-deoxy-D-ribose 5-phosphate = D-glyceraldehyde 3-phosphate + acetaldehyde. It participates in carbohydrate degradation; 2-deoxy-D-ribose 1-phosphate degradation; D-glyceraldehyde 3-phosphate and acetaldehyde from 2-deoxy-alpha-D-ribose 1-phosphate: step 2/2. Shows high stability to high concentrations of acetaldehyde. Functionally, catalyzes a reversible aldol reaction between acetaldehyde and D-glyceraldehyde 3-phosphate to generate 2-deoxy-D-ribose 5-phosphate. The polypeptide is Deoxyribose-phosphate aldolase (Aciduliprofundum boonei (strain DSM 19572 / T469)).